A 275-amino-acid chain; its full sequence is MQNETRTLQLDPHLHIEAYRFKGIMQKFPNHFHDYYVIGFIEKGQRYLACQDQEYIINPGDLLLFNPRDTHSCEQIDGRTLDYRCINVMPDIMEKAVKEITGSGHLPYFSQHVLFRHELTASLQELHILISEEKQALRKEELFLHLLEELIRHYSDVTFLSSVPEPSDEVKMVCEFLEEHYAENVTLNDLSELTGWSKYHLLRSFTKQKGITPNSYMETIRINQAKKLLEQGVRPIDAAFQTGFSDQSHMTKFFKRQVGLTPKQYMKIFEKELHR.

Residues 171–268 form the HTH araC/xylS-type domain; sequence KMVCEFLEEH…GLTPKQYMKI (98 aa). 2 consecutive DNA-binding regions (H-T-H motif) follow at residues 188–209 and 235–258; these read NDLS…TKQK and PIDA…KRQV.

This is an uncharacterized protein from Bacillus subtilis (strain 168).